Here is a 397-residue protein sequence, read N- to C-terminus: Tryptophan synthase beta chain (397 aa).

Position 91 is an N6-(pyridoxal phosphate)lysine (Lys91).

The protein belongs to the TrpB family. As to quaternary structure, tetramer of two alpha and two beta chains. It depends on pyridoxal 5'-phosphate as a cofactor.

It catalyses the reaction (1S,2R)-1-C-(indol-3-yl)glycerol 3-phosphate + L-serine = D-glyceraldehyde 3-phosphate + L-tryptophan + H2O. The protein operates within amino-acid biosynthesis; L-tryptophan biosynthesis; L-tryptophan from chorismate: step 5/5. In terms of biological role, the beta subunit is responsible for the synthesis of L-tryptophan from indole and L-serine. This Bacillus cereus (strain G9842) protein is Tryptophan synthase beta chain.